The primary structure comprises 1530 residues: Coiled-coil domain-containing protein 141 (1530 aa).

Residues 49-127 (NLLEIGSSQD…SMLERRRELL (79 aa)) form a Spectrin repeat. The residue at position 91 (threonine 91) is a Phosphothreonine. 3 coiled-coil regions span residues 220–251 (IDSLLELLQDRRRQLDKHLQQQRQELSQVLQL), 758–785 (LKEKAEQLKDLIHLHQRQRERIQEYEEI), and 865–967 (AKSL…VNKK). Disordered stretches follow at residues 1153–1240 (SEER…PASS), 1259–1285 (LGKAPESVLPPPTAFTDGYHNKKDTFT), 1324–1356 (PREVHDKALPPSSQAQEISLGTQEKVHADSNVT), and 1369–1403 (SPGLSSQSDTSRSHQRQVGPQGDRKNSSAEKSVVS). The segment covering 1334 to 1345 (PSSQAQEISLGT) has biased composition (polar residues). Residues 1409–1497 (PHFSRLLSNV…GTLSSKAILH (89 aa)) enclose the Ig-like domain.

Interacts with DISC1. Interacts preferentially with phosphorylated forms of myosin regulatory light chain (MRLC). Interacts (via the N-terminal region) with HDAC6; inhibits the deacetylase activity of HDAC6. Interacts with KIBRA (via the C-terminal region); retains AMPAR in the cytosol after internalization. In terms of processing, ubiquitinated and degradated by the CDC20-APC/C pathway. During brain development, CDC20-APC/C complex degrades CCDC141 after centrosome translocation into the dilated area. CCDC141 is restabilized in the dilation until the centrosome enters the dilation, at which point it is once again immediately destabilized by CDC20-APC/C complex. The oscillatory regulation of CCDC141 protein is needed for proper cortical migration. Post-translationally, phosphorylation at Thr-91 by PLK1 affects CCDC141 degradation.

It is found in the cytoplasm. The protein resides in the cytoskeleton. Its subcellular location is the microtubule organizing center. It localises to the centrosome. Plays a critical role in cortical radial and GnRH neurons migration during brain development. Regulates cortical radial migration by negatively controlling the activity of histone deacetylase 6 (HDAC6) and promotes centrosome maturation. CAMDI is required for dilation formation of cortical neurons during radial migration. Plays a critical role in learning and memory performance through regulation of AMPA-selective glutamate receptors (AMPARs) cell surface expression in competition with KIBRA. This is Coiled-coil domain-containing protein 141 from Rattus norvegicus (Rat).